Reading from the N-terminus, the 831-residue chain is V-type proton ATPase 116 kDa subunit a1 (831 aa).

Residues 1–388 lie on the Cytoplasmic side of the membrane; that stretch reads MGELFRSEEM…DAYGIGSYRE (388 aa). A helical membrane pass occupies residues 389–407; the sequence is INPAPYTIITFPFLFAVMF. Over 408-409 the chain is Vacuolar; that stretch reads GD. A helical transmembrane segment spans residues 410-426; sequence FGHGILMTLFAVWMVVR. Residues 427–441 lie on the Cytoplasmic side of the membrane; the sequence is ESRILSQKIDNELFS. Residues 442-471 traverse the membrane as a helical segment; that stretch reads MMFSGRYIILLMGLFSTYTGLIYNDCFSKA. The Vacuolar segment spans residues 472–534; sequence LNLFGSSWSV…ATNKLTFLNS (63 aa). A helical membrane pass occupies residues 535 to 554; it reads FKMKMSVILGIIHMIFGVAL. Topologically, residues 555–572 are cytoplasmic; the sequence is SVLNHIYFKKPLNIYLSF. The helical transmembrane segment at 573–593 threads the bilayer; sequence IPEMIFMTTLFGYLVILIIYK. Over 594 to 638 the chain is Vacuolar; sequence WCAYDVSTSMVAPSLLIHFINMFLFSYQDTSLPMLYKGQMGLQCF. Residues 639 to 658 form a helical membrane-spanning segment; that stretch reads LVVCAIICVPWMLVLKPLIL. Topologically, residues 659–718 are cytoplasmic; it reads RRQYLRRKHLGTHNFGGIRVGNGPTEEDAEIIQHDQLSMHSDEEEEFDFGDTVVHQAIHT. The helical transmembrane segment at 719 to 743 threads the bilayer; the sequence is IEYCLGCISNTASYLRLWALSLAHA. Residues 744–764 lie on the Vacuolar side of the membrane; that stretch reads QLSEVLWTMVMHIGLNIRSLG. A helical transmembrane segment spans residues 765–803; sequence GGIALVFIFSAFATLTIAILLIMEGLSAFLHALRLHWVE. At 804–831 the chain is on the cytoplasmic side; sequence FRNKFYMGTGFKFLPFSFETIWEGKFDD.

The protein belongs to the V-ATPase 116 kDa subunit family. As to quaternary structure, V-ATPase is a heteromultimeric enzyme made up of two complexes: the ATP-hydrolytic V1 complex and the proton translocation V0 complex. The V1 complex consists of three catalytic AB heterodimers that form a heterohexamer, three peripheral stalks each consisting of EG heterodimers, one central rotor including subunits D and F, and the regulatory subunits C and H. The proton translocation complex V0 consists of the proton transport subunit a, a ring of proteolipid subunits c9c'', rotary subunit d, subunits e and f, and two accessory subunits.

Its subcellular location is the cytoplasmic vesicle. It localises to the clathrin-coated vesicle membrane. The protein localises to the secretory vesicle. The protein resides in the synaptic vesicle membrane. It is found in the melanosome. In terms of biological role, subunit of the V0 complex of vacuolar(H+)-ATPase (V-ATPase), a multisubunit enzyme composed of a peripheral complex (V1) that hydrolyzes ATP and a membrane integral complex (V0) that translocates protons. V-ATPase is responsible for acidifying and maintaining the pH of intracellular compartments and in some cell types, is targeted to the plasma membrane, where it is responsible for acidifying the extracellular environment. Required for assembly and activity of the vacuolar ATPase. The sequence is that of V-type proton ATPase 116 kDa subunit a1 (atp6v0a1) from Xenopus laevis (African clawed frog).